We begin with the raw amino-acid sequence, 468 residues long: MTKTLPKDFIFGGATAAYQAEGATHTDGKGPVAWDKYLEDNYWYTAEPASDFYNRYPVDLKLSEEFGVNGIRISIAWSRIFPTGKGEVNPKGVEYYHNLFAECHKRHVEPFVTLHHFDTPEALHSDGDFLNRENIEHFVNYAEFCFKEFSEVNYWTTFNEIGPIGDGQYLVGKFPPGIQYDLAKVFQSHHNMMVSHARAVKLFKDSGYSGEIGVVHALPTKYPFDANNPDDVRAAELEDIIHNKFILDATYLGKYSDKTMEGVNHILEVNGGELDLREEDFAALDAAKDLNDFLGINYYMSDWMQAFDGETEIIHNGKGEKGSSKYQIKGVGRRKAPVDVPKTDWDWIIFPQGLYDQIMRVKADYPNYKKIYITENGLGYKDEFVDNTVYDDGRIDYVKKHLEVISDAISDGVNVKGYFMWSLMDVFSWSNGYEKRYGLFYVDFETQERYPKKSAYWYKKVAETQVIE.

The D-galactose 6-phosphate site is built by glutamine 19, histidine 116, asparagine 159, glutamate 160, and asparagine 297. Glutamate 160 (proton donor) is an active-site residue. Catalysis depends on glutamate 375, which acts as the Nucleophile. Positions 428, 429, 435, and 437 each coordinate D-galactose 6-phosphate.

It belongs to the glycosyl hydrolase 1 family.

It carries out the reaction a 6-phospho-beta-D-galactoside + H2O = D-galactose 6-phosphate + an alcohol. It functions in the pathway carbohydrate metabolism; lactose degradation; D-galactose 6-phosphate and beta-D-glucose from lactose 6-phosphate: step 1/1. This is 6-phospho-beta-galactosidase from Streptococcus pyogenes serotype M3 (strain ATCC BAA-595 / MGAS315).